We begin with the raw amino-acid sequence, 1378 residues long: Roundabout homolog 2 (1378 aa).

An N-terminal signal peptide occupies residues 1-21 (MSLLMFTQLLLCGFLYVRVDG). Residues 22–859 (SRLRQEDFPP…EQITDVVKQP (838 aa)) lie on the Extracellular side of the membrane. Ig-like C2-type domains lie at 31–127 (PRIV…ASLE), 133–220 (DDFR…AELT), 225–309 (PTFL…ATLT), 314–409 (PQFV…LEVT), and 418–504 (PIIL…AVLD). Cys-52 and Cys-110 are oxidised to a cystine. Asn-123 is a glycosylation site (N-linked (GlcNAc...) asparagine). Cystine bridges form between Cys-154/Cys-203, Cys-246/Cys-293, and Cys-335/Cys-391. Asn-426 carries an N-linked (GlcNAc...) asparagine glycan. Cys-439 and Cys-488 form a disulfide bridge. Fibronectin type-III domains lie at 524–618 (PPSK…TQDI), 637–735 (VLVR…TEEA), and 739–836 (PPQS…IGRR). Residues 603-625 (LSDPSPMSDPVRTQDISPPAQGV) form a disordered region. Asn-752, Asn-782, Asn-789, and Asn-845 each carry an N-linked (GlcNAc...) asparagine glycan. A helical membrane pass occupies residues 860-880 (AFIAGIGGACWVILMGFSIWL). Residues 881–1378 (YWRRKKRKGL…NSQGQFTGEL (498 aa)) lie on the Cytoplasmic side of the membrane. Disordered stretches follow at residues 1032 to 1084 (GFGY…PLPG), 1124 to 1156 (EDDDRVPTPPVRGVASSPAISFGQQSTATLTPS), and 1215 to 1348 (DVAD…KTEV). Residues 1058–1067 (SSKPQKNNGS) are compositionally biased toward low complexity. The segment covering 1141-1155 (PAISFGQQSTATLTP) has biased composition (polar residues). Thr-1154 is subject to Phosphothreonine. Ser-1156 is subject to Phosphoserine. The span at 1215–1228 (DVADDDADDEEEAL) shows a compositional bias: acidic residues. Residues 1240-1285 (TPGSSMDNLDSSVTGKAFTSSQRPRPTSPFSTDSNTSAALSQSQRP) are compositionally biased toward polar residues. A compositionally biased stretch (low complexity) spans 1319-1343 (SKPSFPSPGGHSSSGTASSKGSTGP).

It belongs to the immunoglobulin superfamily. ROBO family. As to quaternary structure, interacts with SLIT2.

It localises to the membrane. Its function is as follows. Receptor for SLIT2, and probably SLIT1, which are thought to act as molecular guidance cue in cellular migration, including axonal navigation at the ventral midline of the neural tube and projection of axons to different regions during neuronal development. The protein is Roundabout homolog 2 (ROBO2) of Homo sapiens (Human).